Here is a 453-residue protein sequence, read N- to C-terminus: MLIHPEEILETIKMVTNEHLDIRTVTMGINLRGCSHPDIKVFNEQVYTRIMRCAEKLVATTEDIQNLYGIPIINKRISVTPIAIVAEACQEEDLSSVAEALDRAAQETGIDFIGGFSALVQKGMTPGDLSLINSIPQALASTKKVCSSVNVATTKAGINMDAVAKMGHIIKQTAELTRDSNGLGCAKLVVFANAPEDNPFMAGAFHGIGEPDCVINVGVSGPGVVNSAVRALQNPALGDISECIKKTAFKITRMGEMVGREVARRLDAQFGVLDLSLAPTPAVGDSVAAILEAMGLESCGTHGTTAALALLNDAVKKGGAMASSSVGGLSGAFIPVSEDQGMIKAVQRGSLSLDKLEAMTCVCSVGLDMIAVPGDTSPATISAIIADEMAIGMINKKTTAVRVITAPGTKVGDMVEFGGLLGSAPVMPVHNFSSETFIARGGKIPAPIQSLTN.

Belongs to the UPF0210 family. As to quaternary structure, homodimer.

This chain is UPF0210 protein Pcar_2119, found in Syntrophotalea carbinolica (strain DSM 2380 / NBRC 103641 / GraBd1) (Pelobacter carbinolicus).